The following is a 485-amino-acid chain: NADH-quinone oxidoreductase subunit N (485 aa).

14 helical membrane-spanning segments follow: residues 8–28 (LIAL…MLSI), 35–55 (FLNA…LWFV), 71–91 (GFAM…CTFA), 105–125 (FYLL…ANHL), 127–147 (SLFL…GYAF), 159–179 (YTIL…LVYA), 203–223 (LLAG…LVPF), 235–255 (PAPV…GVVM), 271–291 (VVLA…ALSQ), 297–317 (LLGY…IALQ), 326–346 (VGVY…VVSL), 373–393 (AAVM…LGFI), 408–430 (WWLV…RVAV), and 450–470 (YSAG…LGVW).

It belongs to the complex I subunit 2 family. As to quaternary structure, NDH-1 is composed of 13 different subunits. Subunits NuoA, H, J, K, L, M, N constitute the membrane sector of the complex.

The protein resides in the cell inner membrane. The catalysed reaction is a quinone + NADH + 5 H(+)(in) = a quinol + NAD(+) + 4 H(+)(out). NDH-1 shuttles electrons from NADH, via FMN and iron-sulfur (Fe-S) centers, to quinones in the respiratory chain. The immediate electron acceptor for the enzyme in this species is believed to be ubiquinone. Couples the redox reaction to proton translocation (for every two electrons transferred, four hydrogen ions are translocated across the cytoplasmic membrane), and thus conserves the redox energy in a proton gradient. The sequence is that of NADH-quinone oxidoreductase subunit N from Shigella boydii serotype 4 (strain Sb227).